Consider the following 249-residue polypeptide: Transmembrane protein 106C (249 aa).

Positions 1–26 are disordered; that stretch reads MGSRHSTYAHRPFSKRRKADDTEDSL. Residue glycine 2 is the site of N-myristoyl glycine attachment. A run of 2 helical transmembrane segments spans residues 86-106 and 197-217; these read YVLLSILLCLLASGLVVFFLF and SYVYFFCTLPYIGVHNVVVFV.

It belongs to the TMEM106 family. In terms of assembly, interacts with TMEM106B.

It localises to the endoplasmic reticulum membrane. It is found in the membrane. This chain is Transmembrane protein 106C (TMEM106C), found in Bos taurus (Bovine).